Reading from the N-terminus, the 474-residue chain is tRNA-2-methylthio-N(6)-dimethylallyladenosine synthase (474 aa).

Residues 3–120 (QKLHIKTWGC…LPEMINQIRA (118 aa)) enclose the MTTase N-terminal domain. [4Fe-4S] cluster is bound by residues Cys12, Cys49, Cys83, Cys157, Cys161, and Cys164. In terms of domain architecture, Radical SAM core spans 143-375 (KAEGPTAFVS…QQRINNQAAQ (233 aa)). Residues 378–441 (RAMLGTEQRV…TNSLRGDVVR (64 aa)) enclose the TRAM domain.

This sequence belongs to the methylthiotransferase family. MiaB subfamily. As to quaternary structure, monomer. Requires [4Fe-4S] cluster as cofactor.

It is found in the cytoplasm. It catalyses the reaction N(6)-dimethylallyladenosine(37) in tRNA + (sulfur carrier)-SH + AH2 + 2 S-adenosyl-L-methionine = 2-methylsulfanyl-N(6)-dimethylallyladenosine(37) in tRNA + (sulfur carrier)-H + 5'-deoxyadenosine + L-methionine + A + S-adenosyl-L-homocysteine + 2 H(+). Catalyzes the methylthiolation of N6-(dimethylallyl)adenosine (i(6)A), leading to the formation of 2-methylthio-N6-(dimethylallyl)adenosine (ms(2)i(6)A) at position 37 in tRNAs that read codons beginning with uridine. In Mannheimia succiniciproducens (strain KCTC 0769BP / MBEL55E), this protein is tRNA-2-methylthio-N(6)-dimethylallyladenosine synthase.